We begin with the raw amino-acid sequence, 111 residues long: Aspartate 1-decarboxylase (111 aa).

S25 functions as the Schiff-base intermediate with substrate; via pyruvic acid in the catalytic mechanism. S25 bears the Pyruvic acid (Ser) mark. T57 contributes to the substrate binding site. The Proton donor role is filled by Y58. 73–75 contributes to the substrate binding site; sequence GPA.

It belongs to the PanD family. Heterooctamer of four alpha and four beta subunits. Requires pyruvate as cofactor. Post-translationally, is synthesized initially as an inactive proenzyme, which is activated by self-cleavage at a specific serine bond to produce a beta-subunit with a hydroxyl group at its C-terminus and an alpha-subunit with a pyruvoyl group at its N-terminus.

The protein resides in the cytoplasm. The catalysed reaction is L-aspartate + H(+) = beta-alanine + CO2. Its pathway is cofactor biosynthesis; (R)-pantothenate biosynthesis; beta-alanine from L-aspartate: step 1/1. Functionally, catalyzes the pyruvoyl-dependent decarboxylation of aspartate to produce beta-alanine. The polypeptide is Aspartate 1-decarboxylase (Coxiella burnetii (strain RSA 493 / Nine Mile phase I)).